A 424-amino-acid polypeptide reads, in one-letter code: UDP-N-acetylglucosamine 1-carboxyvinyltransferase (424 aa).

22 to 23 (KN) contacts phosphoenolpyruvate. UDP-N-acetyl-alpha-D-glucosamine is bound at residue arginine 93. The Proton donor role is filled by cysteine 117. At cysteine 117 the chain carries 2-(S-cysteinyl)pyruvic acid O-phosphothioketal. UDP-N-acetyl-alpha-D-glucosamine-binding positions include 122–126 (RPIDL), aspartate 307, and isoleucine 329.

The protein belongs to the EPSP synthase family. MurA subfamily.

The protein localises to the cytoplasm. It catalyses the reaction phosphoenolpyruvate + UDP-N-acetyl-alpha-D-glucosamine = UDP-N-acetyl-3-O-(1-carboxyvinyl)-alpha-D-glucosamine + phosphate. It functions in the pathway cell wall biogenesis; peptidoglycan biosynthesis. Its function is as follows. Cell wall formation. Adds enolpyruvyl to UDP-N-acetylglucosamine. This Chlorobium phaeovibrioides (strain DSM 265 / 1930) (Prosthecochloris vibrioformis (strain DSM 265)) protein is UDP-N-acetylglucosamine 1-carboxyvinyltransferase.